The primary structure comprises 514 residues: Probable WRKY transcription factor 4 (514 aa).

Disordered regions lie at residues 1 to 28, 175 to 204, and 278 to 394; these read MSEK…PPRP, QPQT…PLPA, and YKGQ…TVTE. Composition is skewed to polar residues over residues 185–198 and 286–299; these read QVQS…QIPT and PPQN…DNTA. The WRKY 1 DNA-binding region spans 223–287; it reads NVDKPADDGY…YKGQHNHEPP (65 aa). The span at 300 to 313 shows a compositional bias: low complexity; that stretch reads NINGSSINNNRGSS. Polar residues predominate over residues 315–326; sequence LGASQFQTNSSN. A compositionally biased stretch (basic and acidic residues) spans 359–380; the sequence is TDVREKDENEPDPKRRSTEVRI. The segment at residues 403 to 468 is a DNA-binding region (WRKY 2); sequence SEVDLLDDGY…YEGKHNHDLP (66 aa). The Zn(2+) site is built by C434, T436, C439, H463, and H465. A disordered region spans residues 464-514; the sequence is NHDLPAAKSSSHAAAAAQLRPDNRPGGLANLNQQQQQQPVARLRLKEEQTT. Low complexity predominate over residues 469-480; that stretch reads AAKSSSHAAAAA.

As to expression, in young, mature and senescent leaves.

The protein resides in the nucleus. Transcription factor that binds specifically to the W box (5'-(T)TGAC[CT]-3'), a frequently occurring elicitor-responsive cis-acting element. Has a positive role in resistance to necrotrophic pathogens (e.g. Botrytis cinerea), but a negative effect on plant resistance to biotrophic pathogens (e.g. Pseudomonas syringae). This is Probable WRKY transcription factor 4 (WRKY4) from Arabidopsis thaliana (Mouse-ear cress).